A 61-amino-acid polypeptide reads, in one-letter code: Adipokinetic prohormone type 2 (61 aa).

The first 22 residues, 1–22 (MTQSCTLTLVLVVAVLAALATA), serve as a signal peptide directing secretion. Glutamine 23 carries the pyrrolidone carboxylic acid modification. Tryptophan 30 carries the tryptophan amide modification.

This sequence belongs to the AKH/HRTH/RPCH family. In terms of assembly, adipokinetic hormone precursor-related peptide (APRP) can form three type of disulfide-bond dimers: p1 (alpha-alpha), p2 (alpha-beta), and p3 (beta-beta).

It localises to the secreted. Its function is as follows. This hormone, released from cells in the corpora cardiaca, causes release of diglycerides from the fat body and stimulation of muscles to use these diglycerides as an energy source during energy-demanding processes. This Locusta migratoria (Migratory locust) protein is Adipokinetic prohormone type 2.